Here is a 498-residue protein sequence, read N- to C-terminus: Lysine--tRNA ligase (498 aa).

E407 and E414 together coordinate Mg(2+).

This sequence belongs to the class-II aminoacyl-tRNA synthetase family. In terms of assembly, homodimer. Requires Mg(2+) as cofactor.

It is found in the cytoplasm. It catalyses the reaction tRNA(Lys) + L-lysine + ATP = L-lysyl-tRNA(Lys) + AMP + diphosphate. The sequence is that of Lysine--tRNA ligase from Rhizobium johnstonii (strain DSM 114642 / LMG 32736 / 3841) (Rhizobium leguminosarum bv. viciae).